Consider the following 140-residue polypeptide: MNIDEIKQILPHRFPMLLVDRIVEKSEDHAKAIKNVTASEIFFLGHFPAYPIYPGVLIIEGLAQTAGLMLLNRGESVIPVFAGIDNARFKSEVRPGDVLEYEVWLKERKLGMAKVEAIAKVQGKIVATATLLVGVRKNEK.

His46 is an active-site residue.

It belongs to the thioester dehydratase family. FabZ subfamily.

The protein resides in the cytoplasm. The enzyme catalyses a (3R)-hydroxyacyl-[ACP] = a (2E)-enoyl-[ACP] + H2O. Involved in unsaturated fatty acids biosynthesis. Catalyzes the dehydration of short chain beta-hydroxyacyl-ACPs and long chain saturated and unsaturated beta-hydroxyacyl-ACPs. This Pseudothermotoga lettingae (strain ATCC BAA-301 / DSM 14385 / NBRC 107922 / TMO) (Thermotoga lettingae) protein is 3-hydroxyacyl-[acyl-carrier-protein] dehydratase FabZ.